Here is a 947-residue protein sequence, read N- to C-terminus: Protein translocase subunit SecA 1 (947 aa).

ATP is bound by residues Gln87, 105–109 (GEGKT), and Asp525. Residues 907–937 (DDADKAARDPNRPETWGKVGRNEDCPCNSGK) are disordered. Over residues 908 to 918 (DADKAARDPNR) the composition is skewed to basic and acidic residues. Positions 931, 933, 942, and 943 each coordinate Zn(2+).

It belongs to the SecA family. Monomer and homodimer. Part of the essential Sec protein translocation apparatus which comprises SecA, SecYEG and auxiliary proteins SecDF-YajC and YidC. It depends on Zn(2+) as a cofactor.

It is found in the cell inner membrane. The protein resides in the cytoplasm. It catalyses the reaction ATP + H2O + cellular proteinSide 1 = ADP + phosphate + cellular proteinSide 2.. Part of the Sec protein translocase complex. Interacts with the SecYEG preprotein conducting channel. Has a central role in coupling the hydrolysis of ATP to the transfer of proteins into and across the cell membrane, serving both as a receptor for the preprotein-SecB complex and as an ATP-driven molecular motor driving the stepwise translocation of polypeptide chains across the membrane. The protein is Protein translocase subunit SecA 1 of Rhodopseudomonas palustris (strain BisA53).